The sequence spans 519 residues: 2,3-bisphosphoglycerate-independent phosphoglycerate mutase (519 aa).

The Mn(2+) site is built by D18 and S68. Residue S68 is the Phosphoserine intermediate of the active site. Substrate is bound by residues H129, 159–160, R191, R197, 267–270, and K341; these read RD and RADR. Residues D408, H412, D449, H450, and H468 each contribute to the Mn(2+) site.

Belongs to the BPG-independent phosphoglycerate mutase family. In terms of assembly, monomer. It depends on Mn(2+) as a cofactor.

The catalysed reaction is (2R)-2-phosphoglycerate = (2R)-3-phosphoglycerate. The protein operates within carbohydrate degradation; glycolysis; pyruvate from D-glyceraldehyde 3-phosphate: step 3/5. Its function is as follows. Catalyzes the interconversion of 2-phosphoglycerate and 3-phosphoglycerate. This chain is 2,3-bisphosphoglycerate-independent phosphoglycerate mutase, found in Coxiella burnetii (strain Dugway 5J108-111).